The following is a 479-amino-acid chain: Ammonium transporter Rh type C (479 aa).

Topologically, residues 1–9 are cytoplasmic; sequence MAWNTNLRW. The chain crosses the membrane as a helical span at residues 10–30; sequence RLPLTCLLLQVVMVILFGVFV. The Extracellular portion of the chain corresponds to 31–60; the sequence is RYDFEADAHWWSERTHKNLSDVENEFYYRY. The N-linked (GlcNAc...) asparagine glycan is linked to Asn-48. A helical membrane pass occupies residues 61 to 81; it reads PSFQDVHVMVFVGFGFLMTFL. The Cytoplasmic portion of the chain corresponds to 82–85; sequence QRYG. The helical transmembrane segment at 86–106 threads the bilayer; the sequence is FSAVGFNFLLAAFGIQWALLM. Residues 107-123 are Extracellular-facing; sequence QGWFHFLQGRYIVVGVE. The chain crosses the membrane as a helical span at residues 124-144; that stretch reads NLINADFCVASVCVAFGAVLG. The Cytoplasmic portion of the chain corresponds to 145–148; it reads KVSP. The chain crosses the membrane as a helical span at residues 149–169; the sequence is IQLLIMTFFQVTLFAVNEFIL. At 170-177 the chain is on the extracellular side; the sequence is LNLLKVKD. Residues 178–200 form a helical membrane-spanning segment; it reads AGGSMTIHTFGAYFGLTVTRILY. Residues 201-218 lie on the Cytoplasmic side of the membrane; it reads RRNLEQSKERQNSVYQSD. The chain crosses the membrane as a helical span at residues 219–239; it reads LFAMIGTLFLWMYWPSFNSAI. The Extracellular segment spans residues 240–250; sequence SYHGDSQHRAA. The helical transmembrane segment at 251–271 threads the bilayer; sequence INTYCSLAACVLTSVAISSAL. Residues 272 to 281 lie on the Cytoplasmic side of the membrane; it reads HKKGKLDMVH. A helical membrane pass occupies residues 282-302; sequence IQNATLAGGVAVGTAAEMMLM. Pro-303 is a topological domain (extracellular). The chain crosses the membrane as a helical span at residues 304–324; sequence YGALIIGFVCGIISTLGFVYL. At 325-345 the chain is on the cytoplasmic side; the sequence is TPFLESRLHIQDTCGINNLHG. The helical transmembrane segment at 346 to 366 threads the bilayer; the sequence is IPGIIGGIVGAVTAASASLEV. Residues 367-394 are Extracellular-facing; sequence YGKEGLVHSFDFQGFKGDWTARTQGKFQ. The chain crosses the membrane as a helical span at residues 395-415; the sequence is IYGLLVTLAMALMGGIIVGLI. The Cytoplasmic portion of the chain corresponds to 416–479; it reads LRLPFWGQPS…PMASSVPLVP (64 aa).

It belongs to the ammonium transporter (TC 2.A.49) family. Rh subfamily. Homotrimer. N-glycosylated.

The protein resides in the cell membrane. The protein localises to the apical cell membrane. The catalysed reaction is NH4(+)(in) = NH4(+)(out). The enzyme catalyses methylamine(out) = methylamine(in). It carries out the reaction CO2(out) = CO2(in). Functionally, ammonium transporter involved in the maintenance of acid-base homeostasis. Transports ammonium and its related derivative methylammonium across the plasma membrane of epithelial cells likely contributing to renal transepithelial ammonia transport and ammonia metabolism. Postulated to primarily mediate an electroneutral bidirectional transport of NH3 ammonia species according to a mechanism that implies interaction of an NH4(+) ion with acidic residues of the pore entry followed by dissociation of NH4(+) into NH3 and H(+). As a result NH3 transits through the central pore and is protonated on the extracellular side reforming NH4(+). May act as a CO2 channel providing for renal acid secretion. The protein is Ammonium transporter Rh type C (RHCG) of Pan troglodytes (Chimpanzee).